The sequence spans 185 residues: Elongation factor P (185 aa).

This sequence belongs to the elongation factor P family.

The protein localises to the cytoplasm. It functions in the pathway protein biosynthesis; polypeptide chain elongation. Involved in peptide bond synthesis. Stimulates efficient translation and peptide-bond synthesis on native or reconstituted 70S ribosomes in vitro. Probably functions indirectly by altering the affinity of the ribosome for aminoacyl-tRNA, thus increasing their reactivity as acceptors for peptidyl transferase. The protein is Elongation factor P of Thermosynechococcus vestitus (strain NIES-2133 / IAM M-273 / BP-1).